A 175-amino-acid chain; its full sequence is FMN reductase (NADH) RutF (175 aa).

This sequence belongs to the non-flavoprotein flavin reductase family. RutF subfamily.

The catalysed reaction is FMNH2 + NAD(+) = FMN + NADH + 2 H(+). Catalyzes the reduction of FMN to FMNH2 which is used to reduce pyrimidine by RutA via the Rut pathway. The sequence is that of FMN reductase (NADH) RutF from Serratia proteamaculans (strain 568).